The sequence spans 259 residues: Phosphoribosylaminoimidazole-succinocarboxamide synthase (259 aa).

It belongs to the SAICAR synthetase family.

The catalysed reaction is 5-amino-1-(5-phospho-D-ribosyl)imidazole-4-carboxylate + L-aspartate + ATP = (2S)-2-[5-amino-1-(5-phospho-beta-D-ribosyl)imidazole-4-carboxamido]succinate + ADP + phosphate + 2 H(+). Its pathway is purine metabolism; IMP biosynthesis via de novo pathway; 5-amino-1-(5-phospho-D-ribosyl)imidazole-4-carboxamide from 5-amino-1-(5-phospho-D-ribosyl)imidazole-4-carboxylate: step 1/2. The protein is Phosphoribosylaminoimidazole-succinocarboxamide synthase of Hyphomonas neptunium (strain ATCC 15444).